Reading from the N-terminus, the 397-residue chain is Acetate kinase 2 (397 aa).

Asn10 is a binding site for Mg(2+). Lys17 is a binding site for ATP. Residue Arg90 participates in substrate binding. Asp147 acts as the Proton donor/acceptor in catalysis. ATP-binding positions include 207–211 (HLGNG), 281–283 (DCR), and 329–333 (GIGEN). Glu383 contributes to the Mg(2+) binding site.

Belongs to the acetokinase family. As to quaternary structure, homodimer. Mg(2+) is required as a cofactor. The cofactor is Mn(2+).

It is found in the cytoplasm. It carries out the reaction acetate + ATP = acetyl phosphate + ADP. The protein operates within metabolic intermediate biosynthesis; acetyl-CoA biosynthesis; acetyl-CoA from acetate: step 1/2. Functionally, catalyzes the formation of acetyl phosphate from acetate and ATP. Can also catalyze the reverse reaction. This chain is Acetate kinase 2, found in Photobacterium profundum (strain SS9).